The sequence spans 92 residues: Small ribosomal subunit protein uS19 (92 aa).

Belongs to the universal ribosomal protein uS19 family.

Its function is as follows. Protein S19 forms a complex with S13 that binds strongly to the 16S ribosomal RNA. This chain is Small ribosomal subunit protein uS19, found in Orientia tsutsugamushi (strain Boryong) (Rickettsia tsutsugamushi).